The chain runs to 89 residues: Large ribosomal subunit protein bL27 (89 aa).

Residues 1 to 26 (MAHKKAGGSSRNGRDSAGQRRGVKRF) form a disordered region.

It belongs to the bacterial ribosomal protein bL27 family.

The polypeptide is Large ribosomal subunit protein bL27 (Nitratidesulfovibrio vulgaris (strain DSM 19637 / Miyazaki F) (Desulfovibrio vulgaris)).